Reading from the N-terminus, the 277-residue chain is Inositol monophosphatase 1 (277 aa).

Residues Glu-70, Asp-90, Ile-92, and Asp-93 each contribute to the Mg(2+) site. Glu-70 lines the substrate pocket. Residue 92–95 (IDGT) participates in substrate binding. Thr-168 carries the phosphothreonine modification. Residues 194–196 (GTA), Glu-213, and Asp-220 each bind substrate. Residue Asp-220 coordinates Mg(2+).

It belongs to the inositol monophosphatase superfamily. In terms of assembly, homodimer. The cofactor is Mg(2+).

Its subcellular location is the cytoplasm. It catalyses the reaction a myo-inositol phosphate + H2O = myo-inositol + phosphate. The enzyme catalyses 1D-myo-inositol 1-phosphate + H2O = myo-inositol + phosphate. It carries out the reaction 1D-myo-inositol 2-phosphate + H2O = myo-inositol + phosphate. The catalysed reaction is 1D-myo-inositol 3-phosphate + H2O = myo-inositol + phosphate. It catalyses the reaction 1D-myo-inositol 4-phosphate + H2O = myo-inositol + phosphate. The enzyme catalyses 1D-myo-inositol 5-phosphate + H2O = myo-inositol + phosphate. It carries out the reaction 1D-myo-inositol 6-phosphate + H2O = myo-inositol + phosphate. The catalysed reaction is scyllo-inositol 1-phosphate + H2O = scyllo-inositol + phosphate. It catalyses the reaction alpha-D-galactose 1-phosphate + H2O = D-galactose + phosphate. The enzyme catalyses alpha-D-glucose 1-phosphate + H2O = D-glucose + phosphate. It carries out the reaction D-glucose 6-phosphate + H2O = D-glucose + phosphate. The catalysed reaction is beta-D-fructose 1-phosphate + H2O = D-fructose + phosphate. It catalyses the reaction glycerol 2-phosphate + H2O = glycerol + phosphate. The enzyme catalyses adenosine 2'-phosphate + H2O = adenosine + phosphate. It functions in the pathway polyol metabolism; myo-inositol biosynthesis; myo-inositol from D-glucose 6-phosphate: step 2/2. Its activity is regulated as follows. Activity with myo-inositol monophosphates and D-galactose 1-phosphate is inhibited by Li(+), Ca(2+) and Mn(2+), but also by Mg(2+) at concentrations above 3 mM. Phosphatase involved in the dephosphorylation of myo-inositol monophosphates to generate myo-inositol. Is also able to dephosphorylate scyllo-inositol-phosphate, myo-inositol 1,4-diphosphate, scyllo-inositol-1,3-diphosphate and scyllo-inositol-1,4-diphosphate. Also dephosphorylates in vitro other sugar-phosphates including D-galactose-1-phosphate, glucose-1-phosphate, glucose-6-phosphate, fructose-1-phosphate, beta-glycerophosphate and 2'-AMP. Responsible for the provision of inositol required for synthesis of phosphatidylinositols and polyphosphoinositides, and involved in maintaining normal brain function. Has been implicated as the pharmacological target for lithium (Li(+)) action in brain, which is used to treat bipolar affective disorder. Is equally active with 1D-myo-inositol 1-phosphate, 1D-myo-inositol 3-phosphate and D-galactose 1-phosphate. This chain is Inositol monophosphatase 1, found in Homo sapiens (Human).